The primary structure comprises 170 residues: Acireductone dioxygenase (170 aa).

Histidine 99, histidine 101, glutamate 105, and histidine 144 together coordinate Fe(2+). Ni(2+) contacts are provided by histidine 99, histidine 101, glutamate 105, and histidine 144.

Belongs to the acireductone dioxygenase (ARD) family. Monomer. Fe(2+) serves as cofactor. It depends on Ni(2+) as a cofactor.

The catalysed reaction is 1,2-dihydroxy-5-(methylsulfanyl)pent-1-en-3-one + O2 = 3-(methylsulfanyl)propanoate + CO + formate + 2 H(+). The enzyme catalyses 1,2-dihydroxy-5-(methylsulfanyl)pent-1-en-3-one + O2 = 4-methylsulfanyl-2-oxobutanoate + formate + 2 H(+). The protein operates within amino-acid biosynthesis; L-methionine biosynthesis via salvage pathway; L-methionine from S-methyl-5-thio-alpha-D-ribose 1-phosphate: step 5/6. Functionally, catalyzes 2 different reactions between oxygen and the acireductone 1,2-dihydroxy-3-keto-5-methylthiopentene (DHK-MTPene) depending upon the metal bound in the active site. Fe-containing acireductone dioxygenase (Fe-ARD) produces formate and 2-keto-4-methylthiobutyrate (KMTB), the alpha-ketoacid precursor of methionine in the methionine recycle pathway. Ni-containing acireductone dioxygenase (Ni-ARD) produces methylthiopropionate, carbon monoxide and formate, and does not lie on the methionine recycle pathway. This chain is Acireductone dioxygenase, found in Bacillus cereus (strain ATCC 14579 / DSM 31 / CCUG 7414 / JCM 2152 / NBRC 15305 / NCIMB 9373 / NCTC 2599 / NRRL B-3711).